We begin with the raw amino-acid sequence, 78 residues long: Large ribosomal subunit protein bL28 (78 aa).

A disordered region spans residues Met1–Trp29.

Belongs to the bacterial ribosomal protein bL28 family.

This is Large ribosomal subunit protein bL28 from Corynebacterium glutamicum (strain ATCC 13032 / DSM 20300 / JCM 1318 / BCRC 11384 / CCUG 27702 / LMG 3730 / NBRC 12168 / NCIMB 10025 / NRRL B-2784 / 534).